A 170-amino-acid polypeptide reads, in one-letter code: MDLKQFIRDIPDFPQKGIIFRDITPLLKDSRAFREAIDRMCDLVSDRDFDLVVAPEARGFILGAAMAYKLGKGFVPVRKPGKLPYRTVYEEYQLEYGTEQLHIHEDAIERGQKVLIVDDVLATGGTAEALIRLVKKLGGEVSALAFLVELSYLNPRKRLEGYDIKTLIVY.

The protein belongs to the purine/pyrimidine phosphoribosyltransferase family. Homodimer.

It is found in the cytoplasm. It carries out the reaction AMP + diphosphate = 5-phospho-alpha-D-ribose 1-diphosphate + adenine. It functions in the pathway purine metabolism; AMP biosynthesis via salvage pathway; AMP from adenine: step 1/1. Its function is as follows. Catalyzes a salvage reaction resulting in the formation of AMP, that is energically less costly than de novo synthesis. This Thermotoga neapolitana (strain ATCC 49049 / DSM 4359 / NBRC 107923 / NS-E) protein is Adenine phosphoribosyltransferase.